A 379-amino-acid chain; its full sequence is ATP-sensitive inward rectifier potassium channel 10 (379 aa).

Residues 1–61 are Cytoplasmic-facing; sequence MTSVAKVYYS…LKDLWTTFID (61 aa). 1,2-dioctanoyl-sn-glycero-3-phospho-(1D-myo-inositol-4,5-bisphosphate) is bound at residue R36. A helical membrane pass occupies residues 62 to 88; the sequence is MQWRYKLLLFSATFAGTWFLFGVVWYL. Residues 89–114 are Extracellular-facing; sequence VAVAHGDLLELGPPANHTPCVVQVHT. A disulfide bridge links C108 with C140. An intramembrane region (discontinuously helical; Pore-forming) is located at residues 115–131; the sequence is LTGAFLFSLESQTTIGY. The Selectivity filter motif lies at 128-133; the sequence is TIGYGF. Residues 132–140 are Extracellular-facing; that stretch reads GFRYISEEC. A helical transmembrane segment spans residues 141-166; sequence PLAIVLLIAQLVLTTILEIFITGTFL. The Cytoplasmic segment spans residues 167–379; it reads AKIARPKKRA…SALSVRISNV (213 aa). Residues K168, R171, and K173 each coordinate 1,2-dioctanoyl-sn-glycero-3-phospho-(1D-myo-inositol-4,5-bisphosphate). Residue 210–217 coordinates ATP; the sequence is GCQVTGKL.

This sequence belongs to the inward rectifier-type potassium channel (TC 1.A.2.1) family. KCNJ10 subfamily. As to quaternary structure, homotetramer. In kidney cells, it forms heteromeric channels with Kir5.1/KCNJ16; this interaction is required for KCNJ16 localization to the basolateral membrane. Interacts with MAGI1, alone and possibly as a heteromer with KCNJ16; this interaction may facilitate KCNJ10/KCNJ16 potassium channel expression at the basolateral membrane in kidney cells. Interacts with PATJ. Predominantly expressed in the brain, including in glial cells of the cerebellum and forebrain. Expressed at lower levels in the kidney, and other peripheral tissues.

Its subcellular location is the membrane. The protein localises to the basolateral cell membrane. It catalyses the reaction K(+)(in) = K(+)(out). Channel activity is strongly regulated by variations of cytosolic pH; channels are activated by alkaline and inhibited by acidic pH values. Activated by phosphatidylinositol 4,5 biphosphate (PtdIns(4,5)P2). Inhibited by Ba(2+) and Cs(+). Functionally, may be responsible for potassium buffering action of glial cells in the brain. Inward rectifier potassium channels are characterized by a greater tendency to allow potassium to flow into the cell rather than out of it. Their voltage dependence is regulated by the concentration of extracellular potassium; as external potassium is raised, the voltage range of the channel opening shifts to more positive voltages. The inward rectification is mainly due to the blockage of outward current by internal magnesium. Can be blocked by extracellular barium and cesium. In the kidney, together with KCNJ16, mediates basolateral K(+) recycling in distal tubules; this process is critical for Na(+) reabsorption at the tubules. The sequence is that of ATP-sensitive inward rectifier potassium channel 10 from Rattus norvegicus (Rat).